The chain runs to 732 residues: Probable ATP-dependent RNA helicase DHX35 homolog (732 aa).

Positions 1–50 (MSYHPGHGHRQEPRKGAGARRGFARPDDSADAPRTGPLIFEERSTENAGA) are disordered. In terms of domain architecture, Helicase ATP-binding spans 87–251 (LYMCERYRTI…FEMNETGNSD (165 aa)). 100-107 (GETGCGKS) contacts ATP. The short motif at 198–201 (DEAH) is the DEAH box element. The Helicase C-terminal domain maps to 283-457 (AVDTVINIHK…STILQLKALG (175 aa)).

It belongs to the DEAD box helicase family. DEAH subfamily.

It carries out the reaction ATP + H2O = ADP + phosphate + H(+). This chain is Probable ATP-dependent RNA helicase DHX35 homolog, found in Caenorhabditis elegans.